Here is a 264-residue protein sequence, read N- to C-terminus: MVWLPRVPCVAAVILLLTVLSPPMALVRDSRPWFLEYCKSECHFYNGTQRVRLLERYFYNLEENLRFDSDVGEFHAVTELGRPDAENWNSQPEFLEQKRAEVDTVCRHNYEISDKFLVRRRVEPTVTVYPTKTQPLEHHNLLVCSVSDFYPGNIEVRWFRNGKEEKTGIVSTGLVRNGDWTFQTLVMLETVPQSGEVYTCQVEHPSLTDPVTVEWKAQSTSAQNKMLSGVGGFVLGLLFLGAGLFIYFRNQKGQSGLQPTGLLS.

The signal sequence occupies residues 1-26 (MVWLPRVPCVAAVILLLTVLSPPMAL). The tract at residues 27–121 (VRDSRPWFLE…ISDKFLVRRR (95 aa)) is beta-1. The Extracellular segment spans residues 27 to 225 (VRDSRPWFLE…KAQSTSAQNK (199 aa)). Cystine bridges form between Cys-38-Cys-106 and Cys-144-Cys-200. An N-linked (GlcNAc...) asparagine glycan is attached at Asn-46. The beta-2 stretch occupies residues 122–225 (VEPTVTVYPT…KAQSTSAQNK (104 aa)). Residues 124 to 214 (PTVTVYPTKT…PSLTDPVTVE (91 aa)) form the Ig-like C1-type domain. The chain crosses the membrane as a helical span at residues 226–246 (MLSGVGGFVLGLLFLGAGLFI). The Cytoplasmic portion of the chain corresponds to 247–264 (YFRNQKGQSGLQPTGLLS).

Belongs to the MHC class II family. Ubiquitinated in immature dendritic cells leading to down-regulation of MHC class II.

It localises to the membrane. In Mus musculus (Mouse), this protein is H-2 class II histocompatibility antigen, E-B beta chain (H2-Eb1).